Consider the following 649-residue polypeptide: Protein phosphatase Slingshot homolog 3 (649 aa).

Polar residues predominate over residues 1–20 (MALVTVSRSPPASGHSTPVG). The disordered stretch occupies residues 1 to 32 (MALVTVSRSPPASGHSTPVGPTQDRVVRRRGR). A2 carries the post-translational modification N-acetylalanine. Phosphoserine is present on residues S9 and S38. Positions 49-90 (LQDGGDSNVASEADSEPMEEPSGEEQPTEDQTDKGQGLQSPW) are disordered. A compositionally biased stretch (acidic residues) spans 61–78 (ADSEPMEEPSGEEQPTED). At S88 the chain carries Phosphoserine. The region spanning 266–321 (EKMEQAILAELWQVLDTSDLDSVTSKEIRQALELRLGCPLQQYRDFIDNQMLLLMA) is the DEK-C domain. The Tyrosine-protein phosphatase domain occupies 325–466 (RASRIFPHLY…LRTYQGILTA (142 aa)). C410 (phosphocysteine intermediate) is an active-site residue. Low complexity-rich tracts occupy residues 541–551 (LEPSESESTPE) and 608–627 (TRAFQEQGQGQEQSEPGMSS). Disordered regions lie at residues 541–586 (LEPS…KGPW) and 608–649 (TRAF…EDKA). A compositionally biased stretch (basic and acidic residues) spans 639–649 (SVDDSREEDKA).

Belongs to the protein-tyrosine phosphatase family. In terms of assembly, does not bind to, or colocalize with, filamentous actin. As to expression, expressed in brain, small intestine and testis. Also expressed at lower levels in heart, kidney, liver, spleen and thymus.

The protein localises to the cytoplasm. It localises to the cytoskeleton. It is found in the nucleus. It catalyses the reaction O-phospho-L-tyrosyl-[protein] + H2O = L-tyrosyl-[protein] + phosphate. The catalysed reaction is O-phospho-L-seryl-[protein] + H2O = L-seryl-[protein] + phosphate. It carries out the reaction O-phospho-L-threonyl-[protein] + H2O = L-threonyl-[protein] + phosphate. In terms of biological role, protein phosphatase which may play a role in the regulation of actin filament dynamics. Can dephosphorylate and activate the actin binding/depolymerizing factor cofilin, which subsequently binds to actin filaments and stimulates their disassembly. This chain is Protein phosphatase Slingshot homolog 3 (Ssh3), found in Mus musculus (Mouse).